The following is a 248-amino-acid chain: Ubiquinone/menaquinone biosynthesis C-methyltransferase UbiE (248 aa).

S-adenosyl-L-methionine is bound by residues Ser-68, Asp-92, and 120–121 (NA).

Belongs to the class I-like SAM-binding methyltransferase superfamily. MenG/UbiE family.

It catalyses the reaction a 2-demethylmenaquinol + S-adenosyl-L-methionine = a menaquinol + S-adenosyl-L-homocysteine + H(+). The enzyme catalyses a 2-methoxy-6-(all-trans-polyprenyl)benzene-1,4-diol + S-adenosyl-L-methionine = a 5-methoxy-2-methyl-3-(all-trans-polyprenyl)benzene-1,4-diol + S-adenosyl-L-homocysteine + H(+). It participates in quinol/quinone metabolism; menaquinone biosynthesis; menaquinol from 1,4-dihydroxy-2-naphthoate: step 2/2. The protein operates within cofactor biosynthesis; ubiquinone biosynthesis. Methyltransferase required for the conversion of demethylmenaquinol (DMKH2) to menaquinol (MKH2) and the conversion of 2-polyprenyl-6-methoxy-1,4-benzoquinol (DDMQH2) to 2-polyprenyl-3-methyl-6-methoxy-1,4-benzoquinol (DMQH2). This Rickettsia prowazekii (strain Madrid E) protein is Ubiquinone/menaquinone biosynthesis C-methyltransferase UbiE.